The sequence spans 536 residues: Chaperonin GroEL (536 aa).

ATP contacts are provided by residues T29–P32, D86–T90, G412, and D493.

Belongs to the chaperonin (HSP60) family. As to quaternary structure, forms a cylinder of 14 subunits composed of two heptameric rings stacked back-to-back. Interacts with the co-chaperonin GroES.

It is found in the cytoplasm. It catalyses the reaction ATP + H2O + a folded polypeptide = ADP + phosphate + an unfolded polypeptide.. Together with its co-chaperonin GroES, plays an essential role in assisting protein folding. The GroEL-GroES system forms a nano-cage that allows encapsulation of the non-native substrate proteins and provides a physical environment optimized to promote and accelerate protein folding. The polypeptide is Chaperonin GroEL (Onion yellows phytoplasma (strain OY-M)).